The primary structure comprises 319 residues: RWD domain-containing protein 2B (319 aa).

In terms of domain architecture, RWD spans 41–165 (SELDLLASMF…EWVREHASGY (125 aa)). Residue Ser275 is modified to Phosphoserine.

The polypeptide is RWD domain-containing protein 2B (RWDD2B) (Pongo abelii (Sumatran orangutan)).